A 227-amino-acid polypeptide reads, in one-letter code: MSTAIVVFSGGQDSTTCLIQALTHYDHVHCITFDYGQRHNQEIEVAKSVALDLGATSHKVMDVGLLNELAVSSLTRDNIPVSHELQENGLPNSFVPGRNILFLTLAGIYAYQLGAESVITGVCETDFSGYPDCRDEFVKSINQSLVLGMDRKLKIDTPLMWLNKAETWALADKYGKLDYVRNQTLTCYNGVIGDGCGDCPSCDLRKNGLDDYLANKESVMADLESKI.

8 to 18 (FSGGQDSTTCL) is an ATP binding site. Residues Cys187, Cys196, Cys199, and Cys202 each contribute to the Zn(2+) site.

The protein belongs to the QueC family. The cofactor is Zn(2+).

It carries out the reaction 7-carboxy-7-deazaguanine + NH4(+) + ATP = 7-cyano-7-deazaguanine + ADP + phosphate + H2O + H(+). The protein operates within purine metabolism; 7-cyano-7-deazaguanine biosynthesis. Functionally, catalyzes the ATP-dependent conversion of 7-carboxy-7-deazaguanine (CDG) to 7-cyano-7-deazaguanine (preQ(0)). In Aliivibrio salmonicida (strain LFI1238) (Vibrio salmonicida (strain LFI1238)), this protein is 7-cyano-7-deazaguanine synthase.